The primary structure comprises 457 residues: Secreted effector kinase SteC (457 aa).

An ATP-binding site is contributed by Lys256.

Belongs to the protein kinase superfamily. Post-translationally, autophosphorylated.

The protein resides in the secreted. It is found in the host cytoplasm. Its function is as follows. Effector proteins function to alter host cell physiology and promote bacterial survival in host tissues. This protein is a kinase, which is required for SPI-2 T3SS-dependent F-actin meshwork formation in infected host cells. The sequence is that of Secreted effector kinase SteC (steC) from Salmonella typhimurium (strain LT2 / SGSC1412 / ATCC 700720).